Here is a 78-residue protein sequence, read N- to C-terminus: Serine rich endogenous peptide 19 (78 aa).

Residues 1–25 (MCNIVVFLLTLTLFLFSGLSNTAFA) form the signal peptide. Positions 50-64 (KIEVDGSCSRRAPGR) match the SCOOP motif motif. A SxS motif essential for MIK2 binding motif is present at residues 56-58 (SCS). The disordered stretch occupies residues 57–78 (CSRRAPGRRRPPNRPPKPCTKP). The segment covering 69–78 (NRPPKPCTKP) has biased composition (pro residues).

This sequence belongs to the serine rich endogenous peptide (SCOOP) phytocytokine family. Interacts with MIK2 (via extracellular leucine-rich repeat domain); this interaction triggers the formation of complex between MIK2 and the BAK1/SERK3 and SERK4 coreceptors, and subsequent BAK1 activation by phosphorylation.

The protein localises to the cell membrane. The protein resides in the secreted. It is found in the extracellular space. Its subcellular location is the apoplast. Its function is as follows. Brassicaceae-specific phytocytokine (plant endogenous peptide released into the apoplast) perceived by MIK2 in a BAK1/SERK3 and SERK4 coreceptors-dependent manner, that modulates various physiological and antimicrobial processes including growth prevention and reactive oxygen species (ROS) response regulation. This is Serine rich endogenous peptide 19 from Arabidopsis thaliana (Mouse-ear cress).